The following is a 382-amino-acid chain: D-galactonate dehydratase (382 aa).

Mg(2+) is bound at residue Asp-183. The active-site Proton donor is His-185. Mg(2+) contacts are provided by Glu-209 and Glu-235. His-285 serves as the catalytic Proton acceptor.

The protein belongs to the mandelate racemase/muconate lactonizing enzyme family. GalD subfamily. Requires Mg(2+) as cofactor.

It catalyses the reaction D-galactonate = 2-dehydro-3-deoxy-D-galactonate + H2O. It participates in carbohydrate acid metabolism; D-galactonate degradation; D-glyceraldehyde 3-phosphate and pyruvate from D-galactonate: step 1/3. Functionally, catalyzes the dehydration of D-galactonate to 2-keto-3-deoxy-D-galactonate. This Ralstonia pickettii (strain 12J) protein is D-galactonate dehydratase.